A 147-amino-acid polypeptide reads, in one-letter code: Hemoglobin subunit gamma-1 (147 aa).

Glycine 2 carries the post-translational modification N-acetylglycine. A Globin domain is found at 3–147 (HFTEEDKATI…VASALSSRYH (145 aa)). At threonine 13 the chain carries Phosphothreonine. A phosphoserine mark is found at serine 45, serine 51, and serine 53. Lysine 60 is modified (N6-acetyllysine). Heme b is bound at residue histidine 64. Position 83 is an N6-acetyllysine (lysine 83). Histidine 93 is a binding site for heme b. Cysteine 94 carries the S-nitrosocysteine modification. At serine 140 the chain carries Phosphoserine.

Belongs to the globin family. In terms of assembly, heterotetramer of two alpha chains and two gamma chains in fetal hemoglobin (Hb F). As to expression, red blood cells.

In terms of biological role, gamma chains make up the fetal hemoglobin F, in combination with alpha chains. The chain is Hemoglobin subunit gamma-1 (HBG1) from Pongo pygmaeus (Bornean orangutan).